The following is a 248-amino-acid chain: Proteasome subunit alpha (248 aa).

It belongs to the peptidase T1A family. The 20S proteasome core is composed of 14 alpha and 14 beta subunits that assemble into four stacked heptameric rings, resulting in a barrel-shaped structure. The two inner rings, each composed of seven catalytic beta subunits, are sandwiched by two outer rings, each composed of seven alpha subunits. The catalytic chamber with the active sites is on the inside of the barrel. Has a gated structure, the ends of the cylinder being occluded by the N-termini of the alpha-subunits. Is capped by the proteasome-associated ATPase, ARC.

The protein resides in the cytoplasm. Its pathway is protein degradation; proteasomal Pup-dependent pathway. With respect to regulation, the formation of the proteasomal ATPase ARC-20S proteasome complex, likely via the docking of the C-termini of ARC into the intersubunit pockets in the alpha-rings, may trigger opening of the gate for substrate entry. Interconversion between the open-gate and close-gate conformations leads to a dynamic regulation of the 20S proteasome proteolysis activity. In terms of biological role, component of the proteasome core, a large protease complex with broad specificity involved in protein degradation. The protein is Proteasome subunit alpha of Mycobacterium bovis (strain BCG / Pasteur 1173P2).